Consider the following 509-residue polypeptide: uncharacterized protein (509 aa).

13 consecutive transmembrane segments (helical) span residues 14–34 (SAFT…WVIP), 117–137 (TIEA…IGVI), 158–178 (EFFI…TCGI), 188–208 (ILVP…GAIF), 209–229 (LAAS…VIAS), 240–260 (IGFR…YLYW), 303–323 (LILT…MVGG), 324–344 (WWFP…MFIS), 359–379 (ASEL…NLVL), 399–419 (MPGS…GLIV), 423–443 (SGLA…VGIP), 458–478 (MLFL…QIPF), and 484–504 (FVMP…VVQV).

This sequence to E.coli YfcC. The protein to B.subtilis YcgA.

It localises to the cell membrane. This is an uncharacterized protein from Haemophilus influenzae (strain ATCC 51907 / DSM 11121 / KW20 / Rd).